We begin with the raw amino-acid sequence, 478 residues long: Protein nucleotidyltransferase YdiU (478 aa).

ATP-binding residues include Gly84, Gly86, Arg87, Lys107, Asp119, Gly120, Arg170, and Arg177. Residue Asp246 is the Proton acceptor of the active site. Residues Asn247 and Asp256 each contribute to the Mg(2+) site. Asp256 serves as a coordination point for ATP.

It belongs to the SELO family. It depends on Mg(2+) as a cofactor. Requires Mn(2+) as cofactor.

The catalysed reaction is L-seryl-[protein] + ATP = 3-O-(5'-adenylyl)-L-seryl-[protein] + diphosphate. The enzyme catalyses L-threonyl-[protein] + ATP = 3-O-(5'-adenylyl)-L-threonyl-[protein] + diphosphate. It catalyses the reaction L-tyrosyl-[protein] + ATP = O-(5'-adenylyl)-L-tyrosyl-[protein] + diphosphate. It carries out the reaction L-histidyl-[protein] + UTP = N(tele)-(5'-uridylyl)-L-histidyl-[protein] + diphosphate. The catalysed reaction is L-seryl-[protein] + UTP = O-(5'-uridylyl)-L-seryl-[protein] + diphosphate. The enzyme catalyses L-tyrosyl-[protein] + UTP = O-(5'-uridylyl)-L-tyrosyl-[protein] + diphosphate. Its function is as follows. Nucleotidyltransferase involved in the post-translational modification of proteins. It can catalyze the addition of adenosine monophosphate (AMP) or uridine monophosphate (UMP) to a protein, resulting in modifications known as AMPylation and UMPylation. This chain is Protein nucleotidyltransferase YdiU, found in Shigella sonnei (strain Ss046).